The following is a 119-amino-acid chain: Protein Wnt-4 (119 aa).

Serine 1 is lipidated: O-palmitoleoyl serine; by PORCN. 2 disulfides stabilise this stretch: cysteine 69/cysteine 100 and cysteine 85/cysteine 95. Residue asparagine 86 is glycosylated (N-linked (GlcNAc...) asparagine).

Belongs to the Wnt family. Post-translationally, palmitoleoylation is required for efficient binding to frizzled receptors. Depalmitoleoylation leads to Wnt signaling pathway inhibition.

Its subcellular location is the secreted. It localises to the extracellular space. It is found in the extracellular matrix. Ligand for members of the frizzled family of seven transmembrane receptors. Plays an important role in embryonic development. The sequence is that of Protein Wnt-4 (WNT4) from Meleagris gallopavo (Wild turkey).